A 540-amino-acid polypeptide reads, in one-letter code: MSRQFTYKSGAAAKGAFSGCSVVLSGSSSPSYRAGSKGLSGGFGSRSLYSLGCARSVSFNMASGSGRAGGYGFSRGRASGFAGSMFGSVALGPMCPSLCPPGGIHQVIVNKSLLAPLNVELDPEIQKVCAQEREQIKALNNKFASFIDKVRFLEQQNQVLGTKWELLQQQDLDNCKNNLEPILEGYISNLRKQLEMLSGDRVRLDSELRSMRDVVEDYKKRYEEEINKRTTAENEFVVLKKDVDAAYMSKVELQAKVDALEREIKFFTCLYEGEIAQMQSHISDTSVILSMDNNRNLDLNSIIAEVRAQYEDIALKSKAEAEALYQTKFQELQLAAGRHGDDLKHTKNEIAELTRLIQRLRSETESVKKQCSNLETAITDAEQRGHCALKDAQAKLDELEAALLQAKEELARMMCEYQELMSTKLALDIEIATYRKLLEGEECRMSGEYTNSVSISVISSSMAGTAGTGAGFGYSGSGTYGYRPSSVGGGYGFLLGGCVTGSGNCSPRGEAKTRLGSTSEIKDLLGKTPALSSPTKKTPR.

The tract at residues 1–131 (MSRQFTYKSG…DPEIQKVCAQ (131 aa)) is head. Residues 132–167 (EREQIKALNNKFASFIDKVRFLEQQNQVLGTKWELL) form a coil 1A region. Residues 132 to 445 (EREQIKALNN…KLLEGEECRM (314 aa)) enclose the IF rod domain. The interval 168-186 (QQQDLDNCKNNLEPILEGY) is linker 1. The tract at residues 187–278 (ISNLRKQLEM…CLYEGEIAQM (92 aa)) is coil 1B. A linker 12 region spans residues 279-302 (QSHISDTSVILSMDNNRNLDLNSI). A coil 2 region spans residues 303–441 (IAEVRAQYED…ATYRKLLEGE (139 aa)). The tract at residues 442 to 540 (ECRMSGEYTN…LSSPTKKTPR (99 aa)) is tail. The disordered stretch occupies residues 509-540 (GEAKTRLGSTSEIKDLLGKTPALSSPTKKTPR). Over residues 530–540 (ALSSPTKKTPR) the composition is skewed to polar residues.

It belongs to the intermediate filament family. Heterotetramer of two type I and two type II keratins.

Functionally, has a role in hair formation. Specific component of keratin intermediate filaments in the inner root sheath (IRS) of the hair follicle. The chain is Keratin, type II cytoskeletal 73 (KRT73) from Bos taurus (Bovine).